A 269-amino-acid polypeptide reads, in one-letter code: uncharacterized protein (269 aa).

A compositionally biased stretch (basic and acidic residues) spans glutamine 181 to alanine 191. A disordered region spans residues glutamine 181–glycine 203. Positions serine 193–methionine 202 are enriched in polar residues. Serine 200 carries the post-translational modification Phosphoserine.

This is an uncharacterized protein from Schizosaccharomyces pombe (strain 972 / ATCC 24843) (Fission yeast).